A 529-amino-acid polypeptide reads, in one-letter code: Bifunctional purine biosynthesis protein PurH (529 aa).

The 148-residue stretch at 1-148 (MQQRRPIRRA…KNHKDVAIVV (148 aa)) folds into the MGS-like domain.

The protein belongs to the PurH family.

The enzyme catalyses (6R)-10-formyltetrahydrofolate + 5-amino-1-(5-phospho-beta-D-ribosyl)imidazole-4-carboxamide = 5-formamido-1-(5-phospho-D-ribosyl)imidazole-4-carboxamide + (6S)-5,6,7,8-tetrahydrofolate. It catalyses the reaction IMP + H2O = 5-formamido-1-(5-phospho-D-ribosyl)imidazole-4-carboxamide. Its pathway is purine metabolism; IMP biosynthesis via de novo pathway; 5-formamido-1-(5-phospho-D-ribosyl)imidazole-4-carboxamide from 5-amino-1-(5-phospho-D-ribosyl)imidazole-4-carboxamide (10-formyl THF route): step 1/1. The protein operates within purine metabolism; IMP biosynthesis via de novo pathway; IMP from 5-formamido-1-(5-phospho-D-ribosyl)imidazole-4-carboxamide: step 1/1. This chain is Bifunctional purine biosynthesis protein PurH, found in Pectobacterium carotovorum subsp. carotovorum (strain PC1).